The chain runs to 204 residues: MRISVYACFLGLYFLVFSLIVYVILGAEFLVSVLQPGNVARSMLWVLPAYVANASPVVFSRLVRKRWRLHPMDFGLTFVDGQRLLGDNKTFEGFLGGMLSGVLVGILLAYARFVDGVSAFLLPLGALLGDLGGAFVKRRLRIKPGEPAILLDQLDFVAGALILQGLFSKLPAAEVVVAVVLLTPIVHLLTNMAAFVLGLKDVPW.

6 consecutive transmembrane segments (helical) span residues 5-25, 43-63, 91-111, 116-136, 147-167, and 175-195; these read VYAC…YVIL, MLWV…SRLV, FEGF…LAYA, GVSA…GAFV, PAIL…QGLF, and VVVA…MAAF.

Belongs to the CDP-archaeol synthase family. Mg(2+) serves as cofactor.

The protein localises to the cell membrane. The catalysed reaction is 2,3-bis-O-(geranylgeranyl)-sn-glycerol 1-phosphate + CTP + H(+) = CDP-2,3-bis-O-(geranylgeranyl)-sn-glycerol + diphosphate. Its pathway is membrane lipid metabolism; glycerophospholipid metabolism. Functionally, catalyzes the formation of CDP-2,3-bis-(O-geranylgeranyl)-sn-glycerol (CDP-archaeol) from 2,3-bis-(O-geranylgeranyl)-sn-glycerol 1-phosphate (DGGGP) and CTP. This reaction is the third ether-bond-formation step in the biosynthesis of archaeal membrane lipids. This is CDP-archaeol synthase from Thermofilum pendens (strain DSM 2475 / Hrk 5).